The primary structure comprises 192 residues: Molybdenum cofactor cytidylyltransferase (192 aa).

Mg(2+) is bound at residue D101.

As to quaternary structure, monomer. Interacts with the Moco-binding chaperone PaoD. Mg(2+) serves as cofactor. It depends on Mn(2+) as a cofactor.

It catalyses the reaction Mo-molybdopterin + CTP + H(+) = Mo-molybdopterin cytosine dinucleotide + diphosphate. Functionally, transfers a CMP moiety from CTP to Mo-molybdopterin (Mo-MPT) cofactor (Moco or molybdenum cofactor) to form Mo-molybdopterin cytosine dinucleotide (Mo-MCD) cofactor. Is specific for CTP; other nucleotides such as ATP and GTP cannot be utilized. Is also able to convert MPT to MCD in the absence of molybdate, however, with only one catalytic turnover. The chain is Molybdenum cofactor cytidylyltransferase (mocA) from Escherichia coli (strain K12).